Reading from the N-terminus, the 359-residue chain is MIAAQAKLVYQLNKYYSERCQARKAAIAKTIREVCKVVSDVLKEVEVQEPRFISSLTEIDARYEGLEVVSPTEFEVVLYLNQMGVFNFVDDGSLPGCAVLKLSDGRKRSMSLWVEFITASGYLSARKIRSRFQTLVAQAVDKCSYRDVVKMIADTSEVKLRIRERYIVQITPAFKCTGIWPRSAAQWPLPHIPWPGPNRVAEVKAEGFNLLSKECYSLTGKQSSAESDAWVLQFAEAENRLLLGGCRSKCLSVLKTLRDRHLELPGQPLNNYHMKTLLLYECEKHPRETDWDEACLGDRLNGILLQLISCLQCRRCPHYFLPNLDLFQGKPHSALESAAKQTWRLAREILTNPKSLDKL.

Belongs to the mab-21 family.

The protein localises to the nucleus. It localises to the cytoplasm. In terms of biological role, required for several aspects of embryonic development including normal development of the eye. The polypeptide is Protein mab-21-like 2 (mab21l2) (Xenopus tropicalis (Western clawed frog)).